Reading from the N-terminus, the 203-residue chain is Phosphatidylethanolamine N-methyltransferase (203 aa).

It carries out the reaction a 1,2-diacyl-sn-glycero-3-phosphoethanolamine + S-adenosyl-L-methionine = a 1,2-diacyl-sn-glycero-3-phospho-N-methylethanolamine + S-adenosyl-L-homocysteine + H(+). Its pathway is phospholipid metabolism; phosphatidylcholine biosynthesis. Functionally, this enzyme catalyzes three distinct methylation reactions for converting phosphatidylethanolamine to phosphatidylcholine. The polypeptide is Phosphatidylethanolamine N-methyltransferase (pmtA) (Cereibacter sphaeroides (Rhodobacter sphaeroides)).